A 151-amino-acid chain; its full sequence is Transmembrane protein 239 (151 aa).

The next 3 membrane-spanning stretches (helical) occupy residues 61-81, 85-105, and 116-138; these read LWGL…HALF, SYLL…LLPA, and ALLF…GLLT.

It localises to the membrane. This is Transmembrane protein 239 (Tmem239) from Mus musculus (Mouse).